A 320-amino-acid chain; its full sequence is Aspartate carbamoyltransferase catalytic subunit (320 aa).

Residues Arg65 and Thr66 each coordinate carbamoyl phosphate. Lys93 is an L-aspartate binding site. Arg115, His143, and Gln146 together coordinate carbamoyl phosphate. The L-aspartate site is built by Arg176 and Arg230. Residues Gly271 and Pro272 each coordinate carbamoyl phosphate.

The protein belongs to the aspartate/ornithine carbamoyltransferase superfamily. ATCase family. In terms of assembly, heterododecamer (2C3:3R2) of six catalytic PyrB chains organized as two trimers (C3), and six regulatory PyrI chains organized as three dimers (R2).

The enzyme catalyses carbamoyl phosphate + L-aspartate = N-carbamoyl-L-aspartate + phosphate + H(+). Its pathway is pyrimidine metabolism; UMP biosynthesis via de novo pathway; (S)-dihydroorotate from bicarbonate: step 2/3. Its function is as follows. Catalyzes the condensation of carbamoyl phosphate and aspartate to form carbamoyl aspartate and inorganic phosphate, the committed step in the de novo pyrimidine nucleotide biosynthesis pathway. The chain is Aspartate carbamoyltransferase catalytic subunit from Maricaulis maris (strain MCS10) (Caulobacter maris).